The sequence spans 332 residues: UDP-N-acetylenolpyruvoylglucosamine reductase (332 aa).

An FAD-binding PCMH-type domain is found at 55–221 (VGGAADLYVA…TQATLQLAPG (167 aa)). Residue arginine 200 is part of the active site. Serine 251 functions as the Proton donor in the catalytic mechanism. Glutamate 321 is a catalytic residue.

It belongs to the MurB family. The cofactor is FAD.

Its subcellular location is the cytoplasm. The catalysed reaction is UDP-N-acetyl-alpha-D-muramate + NADP(+) = UDP-N-acetyl-3-O-(1-carboxyvinyl)-alpha-D-glucosamine + NADPH + H(+). The protein operates within cell wall biogenesis; peptidoglycan biosynthesis. Its function is as follows. Cell wall formation. The polypeptide is UDP-N-acetylenolpyruvoylglucosamine reductase (Nostoc punctiforme (strain ATCC 29133 / PCC 73102)).